The following is a 473-amino-acid chain: Mogroside IIIx synthase (473 aa).

Catalysis depends on H43, which acts as the Proton acceptor. D142 functions as the Charge relay in the catalytic mechanism. S293, Q356, W374, N375, S376, E379, D395, and Q396 together coordinate UDP-alpha-D-glucose.

Belongs to the UDP-glycosyltransferase family. As to expression, highly expressed in mature fruits.

It catalyses the reaction mogroside IIE + UDP-alpha-D-glucose = mogroside IIIX + UDP + H(+). The enzyme catalyses mogroside III + UDP-alpha-D-glucose = mogroside IV + UDP + H(+). The catalysed reaction is mogroside III + UDP-alpha-D-glucose = siamenoside I + UDP + H(+). It carries out the reaction mogroside IIIX + UDP-alpha-D-glucose = mogroside IVA + UDP + H(+). It catalyses the reaction mogroside IIIX + UDP-alpha-D-glucose = siamenoside I + UDP + H(+). The enzyme catalyses mogroside IV + UDP-alpha-D-glucose = mogroside V + UDP + H(+). The catalysed reaction is siamenoside I + UDP-alpha-D-glucose = mogroside V + UDP + H(+). It carries out the reaction mogroside V + UDP-alpha-D-glucose = mogroside VI + UDP + H(+). It functions in the pathway secondary metabolite biosynthesis; terpenoid biosynthesis. Its activity is regulated as follows. Activity is increased by Mg(2+). Functionally, UDP-glycosyltransferase involved in the biosynthesis of cucurbitacin and mogroside tetracyclic triterpene natural products (e.g. siamenoside I and mogrosides IV, V and VI). Cucurbitacins have cytotoxic properties and exhibit deterrent taste as a defense barrier against herbivores. Mogrosides are nonsugar highly oxygenated compounds used as high-intensity zero-calorie sweeteners; they also possess pharmacological properties such as regulating immunity, lowering blood sugar and lipid levels, protecting the liver, and acting as antioxidants and antitumor agents. In terms of biological role, catalyzes the branched glucosylations of mogroside II-E, mogroside III, mogroside IIIx, mogroside IV, mogroside IV-A, siamenoside I and mogroside V, ending in the production of mogroside VI. Catalyzes the beta(1-6) branched glucosylations of mogroside II-E to produce mogroside IIIx by forming a beta(1-6) glycosidic bond with the 6-hydroxyl of glucose 1-C24; a subsequent glycosylation at glucose 1-C3 leads to the formation of mogroside IV-A with beta(1-6) glycosidic bond. Can also use mogroside III-E, mogroside III-A, mogroside IV-E and mogroside IV-A as substrates. In Siraitia grosvenorii (Monk's fruit), this protein is Mogroside IIIx synthase.